The following is a 334-amino-acid chain: Nucleoid-associated protein PFL_1060 (334 aa).

It belongs to the YejK family.

Its subcellular location is the cytoplasm. It localises to the nucleoid. The protein is Nucleoid-associated protein PFL_1060 of Pseudomonas fluorescens (strain ATCC BAA-477 / NRRL B-23932 / Pf-5).